Here is a 369-residue protein sequence, read N- to C-terminus: N-methyltransferase imqF (369 aa).

This sequence belongs to the methyltransferase superfamily.

The protein operates within secondary metabolite biosynthesis. N-methyltransferase; part of the gene cluster that mediates the biosynthesis of imizoquins A to D, tripeptide-derived alkaloids that serve a protective role against oxidative stress that are essential for normal germination. ImqB is a canonical three-module NRPS that assembles the tripeptide backbone of the imizoquins via condensation of Trp, Tyr, and Leu-derived precursors. N-methylation by imqF and phenol oxidation by imqC, followed by cyclization via the FAD-dependent oxidase imqH carry out the three-step transformation of L-tyrosine into tetrahydroisoquinoline. Importantly, this sequence requires the presence of a free amine in the tyrosine moiety, indicating that isoquinoline formation occurs prior to peptide bond formation. The imidazolidin-4-one ring of imizoquins could form following additional oxidation of the methyl-derived bridgehead carbon by imqH. Lastly, O-methylation by imqG and leucine hydroxylation by imqE complete biosynthesis of the imizoquins. The chain is N-methyltransferase imqF from Aspergillus flavus (strain ATCC 200026 / FGSC A1120 / IAM 13836 / NRRL 3357 / JCM 12722 / SRRC 167).